A 161-amino-acid polypeptide reads, in one-letter code: MSSFVTNGYLPVTLEPHELTLDIKTNIRNAVYKTYLHREISGKMAKKIEIREDVELPLGEIVNNSVVINVPCVITYAYYHVGDIVRGTLNIEDESNVTIQCGDLICKLSRDSGTVSFSDSKYCFFRNGNAYDNGSEVTAVLMEAQQGIESSFVFLANIVDS.

It belongs to the poxviridae DNA-directed RNA polymerase 18 kDa subunit family. As to quaternary structure, the DNA-dependent RNA polymerase used for intermediate and late genes expression consists of eight subunits Rpo30/OPG66, Rpo7/OPG90, Rpo22/OPG103, Rpo147/OPG105, Rpo18/OPG119, Rpo19/OPG131, Rpo132/OPG151 and Rpo35/OPG156. The same holoenzyme, with the addition of the transcription-specificity factor OPG109, is used for early gene expression.

The protein resides in the virion. It catalyses the reaction RNA(n) + a ribonucleoside 5'-triphosphate = RNA(n+1) + diphosphate. Functionally, part of the DNA-dependent RNA polymerase which catalyzes the transcription of viral DNA into RNA using the four ribonucleoside triphosphates as substrates. Responsible for the transcription of early, intermediate and late genes. DNA-dependent RNA polymerase associates with the early transcription factor (ETF), itself composed of OPG118 and OPG133, thereby allowing the early genes transcription. Late transcription, and probably also intermediate transcription, require newly synthesized RNA polymerase. This is DNA-directed RNA polymerase 18 kDa subunit (OPG119) from Vaccinia virus (strain Ankara) (VACV).